Here is a 130-residue protein sequence, read N- to C-terminus: Small ribosomal subunit protein uS9 (130 aa).

It belongs to the universal ribosomal protein uS9 family.

The chain is Small ribosomal subunit protein uS9 from Xanthomonas axonopodis pv. citri (strain 306).